Consider the following 143-residue polypeptide: uncharacterized protein (143 aa).

Residues 4 to 24 traverse the membrane as a helical segment; sequence FGIVALSIICSIAFLFVAYGV. The interval 97–143 is disordered; that stretch reads TVPFVNTEAPPPRLSSSFSRQSGENAETQSQVSASPFNDKNSPYVQE. Positions 110–143 are enriched in polar residues; sequence LSSSFSRQSGENAETQSQVSASPFNDKNSPYVQE.

It is found in the golgi apparatus membrane. This is an uncharacterized protein from Schizosaccharomyces pombe (strain 972 / ATCC 24843) (Fission yeast).